The chain runs to 205 residues: uncharacterized protein (205 aa).

Residues 51 to 189 (ANVDAVAILA…KKGFAIDVRL (139 aa)) form the Nudix hydrolase domain. Positions 90 to 111 (GLVDSKESCEDAAIRELREETG) match the Nudix box motif.

It belongs to the Nudix hydrolase family.

Its subcellular location is the cytoplasm. It is found in the nucleus. This is an uncharacterized protein from Schizosaccharomyces pombe (strain 972 / ATCC 24843) (Fission yeast).